Here is an 830-residue protein sequence, read N- to C-terminus: WD repeat-containing protein 75 (830 aa).

WD repeat units lie at residues 4 to 43 (EENI…KVYS), 47 to 86 (EECV…KLWD), 90 to 131 (GILI…QLVS), 145 to 184 (KELS…YFFK), 193 to 231 (LSSS…RLWR), 237 to 276 (KKYT…VEWR), 279 to 318 (TEKN…IIIH), 324 to 362 (SAVI…QFYS), and 376 to 423 (QQEY…KLWM). Lysine 123 is covalently cross-linked (Glycyl lysine isopeptide (Lys-Gly) (interchain with G-Cter in SUMO2)). Residue lysine 427 forms a Glycyl lysine isopeptide (Lys-Gly) (interchain with G-Cter in SUMO2) linkage. 4 WD repeats span residues 430–474 (GFIL…KVWI), 487–525 (GWTC…TIWD), 529–569 (WELK…CCWN), and 574–611 (ALEW…FVFK). N6-acetyllysine is present on lysine 466. A phosphoserine mark is found at serine 664 and serine 672. A Glycyl lysine isopeptide (Lys-Gly) (interchain with G-Cter in SUMO2) cross-link involves residue lysine 676. Residues 763–806 (SAKEIPEDVDMEEEKESEDSDEENDFTEKVQDTSNTGLGEDIIH) form a disordered region. Over residues 769 to 787 (EDVDMEEEKESEDSDEEND) the composition is skewed to acidic residues. Serine 779, serine 782, serine 796, and serine 811 each carry phosphoserine.

Component of the proposed t-UTP subcomplex of the ribosomal small subunit (SSU) processome. SSU processome is composed of more than 70 proteins and the RNA chaperone small nucleolar RNA (snoRNA) U3.

The protein resides in the nucleus. The protein localises to the nucleolus. In terms of biological role, ribosome biogenesis factor. Part of the small subunit (SSU) processome, first precursor of the small eukaryotic ribosomal subunit. During the assembly of the SSU processome in the nucleolus, many ribosome biogenesis factors, an RNA chaperone and ribosomal proteins associate with the nascent pre-rRNA and work in concert to generate RNA folding, modifications, rearrangements and cleavage as well as targeted degradation of pre-ribosomal RNA by the RNA exosome. Involved in nucleolar processing of pre-18S ribosomal RNA. Required for optimal pre-ribosomal RNA transcription by RNA polymerase I. This Homo sapiens (Human) protein is WD repeat-containing protein 75.